We begin with the raw amino-acid sequence, 240 residues long: Ribosomal RNA large subunit methyltransferase E (240 aa).

Positions 1-20 (MSKAGGNKGGSRTGGRGGAG) are enriched in gly residues. The segment at 1–40 (MSKAGGNKGGSRTGGRGGAGSSNLHVRVKKKAGTTKESSR) is disordered. The S-adenosyl-L-methionine site is built by Gly-92, Trp-94, Asp-115, Asp-131, and Asp-155. The active-site Proton acceptor is the Lys-195.

It belongs to the class I-like SAM-binding methyltransferase superfamily. RNA methyltransferase RlmE family.

Its subcellular location is the cytoplasm. The enzyme catalyses uridine(2552) in 23S rRNA + S-adenosyl-L-methionine = 2'-O-methyluridine(2552) in 23S rRNA + S-adenosyl-L-homocysteine + H(+). Specifically methylates the uridine in position 2552 of 23S rRNA at the 2'-O position of the ribose in the fully assembled 50S ribosomal subunit. The protein is Ribosomal RNA large subunit methyltransferase E of Brucella ovis (strain ATCC 25840 / 63/290 / NCTC 10512).